The following is a 63-amino-acid chain: Acrosin inhibitor 1 (63 aa).

Residues 8 to 63 (FGFPPDCKVYTEACTREYNPICDSAAKTYSNECTFCNEKMNNDADIHFNHFGECEY) enclose the Kazal-like domain. Intrachain disulfides connect Cys14–Cys43, Cys21–Cys40, and Cys29–Cys61.

In terms of tissue distribution, seminal plasma.

Its subcellular location is the secreted. Strong inhibitor of acrosin. The polypeptide is Acrosin inhibitor 1 (Bos taurus (Bovine)).